Here is a 286-residue protein sequence, read N- to C-terminus: MPFGPASRLGVSLFDETPPVEWVPGRSQEEAETIIRAIYRQVLGNAYVMESERLAVPESQFKRGELSVREFVRAVAKSELYRSRFFTSCARYRAIELNFRHLLGRPPLDLEEMRSHSTILDTQGFEAEIDSYIDGDEYQSTFGENIVPYIRGYKTEALQSMVQFTHTFQLVRGASSSSLKGDLSGKAPKLNALVIQSTPTAVISPASAGATFSTPPTGARTRLGVDASAGGKVYRIEVTGYRAKTFNNISKFRRSNQVFLVPYEKLSQEYQRIHQQGGVIASITPV.

Positions 2 to 179 (PFGPASRLGV…LVRGASSSSL (178 aa)) constitute a PBS-linker domain. The 56-residue stretch at 231–286 (GKVYRIEVTGYRAKTFNNISKFRRSNQVFLVPYEKLSQEYQRIHQQGGVIASITPV) folds into the CpcD-like domain.

This sequence belongs to the phycobilisome linker protein family. In terms of assembly, the phycobilisome is a hemidiscoidal structure that is composed of two distinct substructures: a core complex and six rods radiating from the core.

Its subcellular location is the cellular thylakoid membrane. Rod linker protein, associated with phycoerythrocyanin. Linker polypeptides determine the state of aggregation and the location of the disk-shaped phycobiliprotein units within the phycobilisome and modulate their spectroscopic properties in order to mediate a directed and optimal energy transfer. The polypeptide is Phycobilisome 31.8 kDa linker polypeptide, phycoerythrin-associated, rod (cpeC) (Microchaete diplosiphon (Fremyella diplosiphon)).